A 614-amino-acid polypeptide reads, in one-letter code: NADH-quinone oxidoreductase subunit L (614 aa).

A run of 15 helical transmembrane segments spans residues 1–21, 33–53, 79–99, 136–156, 168–188, 207–227, 247–267, 271–291, 327–347, 372–392, 410–430, 455–475, 492–512, 533–553, and 593–613; these read MSIIFFIILFPLIGFLFLSTI, IGIFSIFISFFITCFYGVSIL, FFLDGLSLSMLFVITGVGLLI, FLFMYLGWEGVSVCSYLLIGF, FKAFILTRVSDVFLMIGMFLI, LNVENFYYLDYITLFLLLGVI, TPVSALIHAATMVTAGVYLIA, FLFLLTPGILYLVGLIGTLTI, AWSAAITHLIMHAIFKALLFL, LPFLYISFIVGGASLVSFPLI, GCIDFFIIGLFCSFLTAIYTF, IPLFVLLLLSTVFGSYISPPL, FEIICSILSLSGIYLSYYIWI, FFLKGWGFNWFYKISFVYFYL, and YVASMILGINFIFLLMLFFYF.

Belongs to the complex I subunit 5 family. In terms of assembly, composed of 13 different subunits. Subunits NuoA, H, J, K, L, M, N constitute the membrane sector of the complex.

The protein resides in the cell membrane. The enzyme catalyses a quinone + NADH + 5 H(+)(in) = a quinol + NAD(+) + 4 H(+)(out). In terms of biological role, NDH-1 shuttles electrons from NADH, via FMN and iron-sulfur (Fe-S) centers, to quinones in the respiratory chain. Couples the redox reaction to proton translocation (for every two electrons transferred, four hydrogen ions are translocated across the cytoplasmic membrane), and thus conserves the redox energy in a proton gradient. This chain is NADH-quinone oxidoreductase subunit L (nuoL), found in Buchnera aphidicola subsp. Acyrthosiphon pisum (strain APS) (Acyrthosiphon pisum symbiotic bacterium).